We begin with the raw amino-acid sequence, 242 residues long: Carboxy-S-adenosyl-L-methionine synthase (242 aa).

S-adenosyl-L-methionine contacts are provided by residues Tyr38, 63 to 65 (GCS), 88 to 89 (DN), 116 to 117 (DL), and Arg199.

This sequence belongs to the class I-like SAM-binding methyltransferase superfamily. Cx-SAM synthase family. Homodimer.

The enzyme catalyses prephenate + S-adenosyl-L-methionine = carboxy-S-adenosyl-L-methionine + 3-phenylpyruvate + H2O. Its function is as follows. Catalyzes the conversion of S-adenosyl-L-methionine (SAM) to carboxy-S-adenosyl-L-methionine (Cx-SAM). This Methylococcus capsulatus (strain ATCC 33009 / NCIMB 11132 / Bath) protein is Carboxy-S-adenosyl-L-methionine synthase.